A 104-amino-acid chain; its full sequence is N(4)-acetylcytidine amidohydrolase (104 aa).

The ASCH domain maps to 6 to 94 (ITFFQRFQND…IAEIYPNQTQ (89 aa)). Lysine 21 acts as the Proton acceptor in catalysis. Residue threonine 24 is the Nucleophile of the active site. Glutamate 74 (proton donor) is an active-site residue.

It belongs to the N(4)-acetylcytidine amidohydrolase family.

It carries out the reaction N(4)-acetylcytidine + H2O = cytidine + acetate + H(+). It catalyses the reaction N(4)-acetyl-2'-deoxycytidine + H2O = 2'-deoxycytidine + acetate + H(+). The catalysed reaction is N(4)-acetylcytosine + H2O = cytosine + acetate + H(+). Functionally, catalyzes the hydrolysis of N(4)-acetylcytidine (ac4C). In Salmonella dublin (strain CT_02021853), this protein is N(4)-acetylcytidine amidohydrolase (yqfB).